Here is a 487-residue protein sequence, read N- to C-terminus: Serralysin (487 aa).

The propeptide occupies 1–16 (MQSTKKAIEITESNFA). His-192 is a binding site for Zn(2+). Glu-193 is a catalytic residue. The Zn(2+) site is built by His-196, His-202, and Tyr-232. Positions 269, 271, 273, 301, 303, 304, 306, 343, 345, 350, 352, 354, 359, 361, 363, 367, 368, 369, 372, 376, 377, 378, 379, 381, 385, 386, 387, 388, 390, 399, 406, and 416 each coordinate Ca(2+). Hemolysin-type calcium-binding repeat units lie at residues 348 to 365 (IGGS…NNVL) and 366 to 383 (KGGA…ADEL).

The protein belongs to the peptidase M10B family. The cofactor is Ca(2+). It depends on Zn(2+) as a cofactor.

The protein resides in the secreted. The catalysed reaction is Preferential cleavage of bonds with hydrophobic residues in P1'.. Naturally present in the silkworm intestine and allows the emerging moth to dissolve its cocoon. The protein is Serralysin of Serratia marcescens (strain ATCC 21074 / E-15).